Here is a 461-residue protein sequence, read N- to C-terminus: Protein naked cuticle homolog 2 (461 aa).

Positions 1 to 106 (MGKFQSKHAA…DGEKAASREG (106 aa)) are disordered. Gly2 carries the N-myristoyl glycine lipid modification. 2 stretches are compositionally biased toward basic and acidic residues: residues 34 to 73 (RGAE…DKGS) and 97 to 106 (DGEKAASREG). Residues 121–186 (QCDVSVEEDN…LRVKLTVSPE (66 aa)) are interaction with DVL1, DVL2 and DVL3. The 36-residue stretch at 127–162 (EEDNRQEWTFTLYDFDNSGKVTREDMSSLMHTIYEV) folds into the EF-hand domain. Ca(2+) contacts are provided by Asp140, Asp142, Ser144, Lys146, and Asp151. Disordered regions lie at residues 176-205 (TLRV…PTRG), 263-302 (YTSK…HAIH), 321-359 (TRAL…PGKA), 372-414 (SAQD…GQPT), and 441-461 (HEHH…FHPS). The segment covering 188-205 (SSKKECPLTGQDREPTRG) has biased composition (basic and acidic residues). Residues 307 to 396 (QVLAEHVIPA…PPQPYGHKRY (90 aa)) form an interaction with TGFA region. Positions 341 to 350 (PKGPGKPLGT) are enriched in low complexity. The segment covering 380 to 390 (PQPPPQPPPQP) has biased composition (pro residues).

This sequence belongs to the NKD family. In terms of assembly, interacts with RNF25, TGFA (via cytoplasmic domain), and PPP2R3A. Interacts with DVL1, DVL2 and DVL3. Post-translationally, ubiquitinated, leading to rapid proteasomal degradation. Interaction with TGFA interferes with RNF25 binding and protects against ubiquitination mediated by RNF25. As to expression, expressed in the cecum, colon, esophagus, ileum, jejunum, skin and stomach.

It is found in the cell membrane. It localises to the cytoplasm. The protein localises to the cytoplasmic vesicle. Its function is as follows. Cell autonomous antagonist of the canonical Wnt signaling pathway. May activate a second Wnt signaling pathway that controls planar cell polarity. Required for processing of TGFA and for targeting of TGFA to the basolateral membrane of polarized epithelial cells. The chain is Protein naked cuticle homolog 2 (Nkd2) from Mus musculus (Mouse).